A 276-amino-acid polypeptide reads, in one-letter code: Formamidopyrimidine-DNA glycosylase (276 aa).

The active-site Schiff-base intermediate with DNA is the Pro-2. The Proton donor role is filled by Glu-3. The Proton donor; for beta-elimination activity role is filled by Lys-59. His-93, Arg-112, and Arg-155 together coordinate DNA. The segment at 240 to 274 (QVYNREGKPCPRCGDKIAKKKVGGRSSYYCPTCQK) adopts an FPG-type zinc-finger fold. The active-site Proton donor; for delta-elimination activity is the Arg-264.

It belongs to the FPG family. As to quaternary structure, monomer. Zn(2+) is required as a cofactor.

It carries out the reaction Hydrolysis of DNA containing ring-opened 7-methylguanine residues, releasing 2,6-diamino-4-hydroxy-5-(N-methyl)formamidopyrimidine.. The enzyme catalyses 2'-deoxyribonucleotide-(2'-deoxyribose 5'-phosphate)-2'-deoxyribonucleotide-DNA = a 3'-end 2'-deoxyribonucleotide-(2,3-dehydro-2,3-deoxyribose 5'-phosphate)-DNA + a 5'-end 5'-phospho-2'-deoxyribonucleoside-DNA + H(+). Its function is as follows. Involved in base excision repair of DNA damaged by oxidation or by mutagenic agents. Acts as a DNA glycosylase that recognizes and removes damaged bases. Has a preference for oxidized purines, such as 7,8-dihydro-8-oxoguanine (8-oxoG). Has AP (apurinic/apyrimidinic) lyase activity and introduces nicks in the DNA strand. Cleaves the DNA backbone by beta-delta elimination to generate a single-strand break at the site of the removed base with both 3'- and 5'-phosphates. This is Formamidopyrimidine-DNA glycosylase from Pelotomaculum thermopropionicum (strain DSM 13744 / JCM 10971 / SI).